The following is a 553-amino-acid chain: Glutamate--tRNA ligase (553 aa).

The 'HIGH' region motif lies at 41–51 (PSPTGFQHIGG). A 'KMSKS' region motif is present at residues 293–297 (KLSKR). K296 provides a ligand contact to ATP.

The protein belongs to the class-I aminoacyl-tRNA synthetase family. Glutamate--tRNA ligase type 1 subfamily. As to quaternary structure, monomer.

It is found in the cytoplasm. It carries out the reaction tRNA(Glu) + L-glutamate + ATP = L-glutamyl-tRNA(Glu) + AMP + diphosphate. Catalyzes the attachment of glutamate to tRNA(Glu) in a two-step reaction: glutamate is first activated by ATP to form Glu-AMP and then transferred to the acceptor end of tRNA(Glu). The polypeptide is Glutamate--tRNA ligase (Clostridium beijerinckii (strain ATCC 51743 / NCIMB 8052) (Clostridium acetobutylicum)).